Here is a 336-residue protein sequence, read N- to C-terminus: F-box protein At5g50450 (336 aa).

In terms of domain architecture, F-box spans 19–70 (NNHFEDLHDDLIISILRKLATSASSPSDFLTVLSTCKRLNRLGLHPLVLSKA). His263, Cys266, Cys279, Cys282, Cys288, Cys292, His301, and Cys305 together coordinate Zn(2+). The MYND-type; atypical zinc-finger motif lies at 263 to 305 (HGGCGRPETRAHEFRRCSVCGKVNYCSRGCQALDWRAKHKVEC).

The chain is F-box protein At5g50450 from Arabidopsis thaliana (Mouse-ear cress).